Consider the following 103-residue polypeptide: Large ribosomal subunit protein uL23 (103 aa).

This sequence belongs to the universal ribosomal protein uL23 family. Part of the 50S ribosomal subunit. Contacts protein L29, and trigger factor when it is bound to the ribosome.

Its function is as follows. One of the early assembly proteins it binds 23S rRNA. One of the proteins that surrounds the polypeptide exit tunnel on the outside of the ribosome. Forms the main docking site for trigger factor binding to the ribosome. In Aquifex aeolicus (strain VF5), this protein is Large ribosomal subunit protein uL23.